Reading from the N-terminus, the 218-residue chain is Small ribosomal subunit protein uS3c (218 aa).

The 72-residue stretch at 47 to 118 (VQKNMRTSSG…KLNIAVTRIA (72 aa)) folds into the KH type-2 domain.

The protein belongs to the universal ribosomal protein uS3 family. As to quaternary structure, part of the 30S ribosomal subunit.

The protein localises to the plastid. It localises to the chloroplast. This chain is Small ribosomal subunit protein uS3c (rps3), found in Nicotiana tomentosiformis (Tobacco).